Here is a 248-residue protein sequence, read N- to C-terminus: MEQTRKIPNQPLPTPTSQSKKRRTPLLSFLSKVSWKLRLQKRELLKNALFVLAERARDPNAKKRHLAMRGLGALAREAPDKQVRKYKKVMLDLLVRGLYDPVSSEVIHESVKTLTIMLGKIQGHGLGSFFIDITLQARTLLDDEDDSVRYSAFVLFGQLASFAGWRWKKFFTQQVNQTQDSLLGHLQDESPKVAKACKMTVRACVPYLKPRKVPSFQSEEEQKNHRLSRQLSHCHPEILLFFYANKIL.

The segment at 1-23 (MEQTRKIPNQPLPTPTSQSKKRR) is disordered. An HEAT repeat occupies 128–163 (SFFIDITLQARTLLDDEDDSVRYSAFVLFGQLASFA).

As to expression, prominent expression seen in testis, brain, liver and heart. Weakly expressed in the kidney.

Its subcellular location is the nucleus. The protein localises to the nucleolus. This chain is Protein maestro (Mro), found in Mus musculus (Mouse).